The chain runs to 236 residues: tRNA (guanine-N(1)-)-methyltransferase (236 aa).

Residues Gly-112 and 132-137 (VGDFIL) each bind S-adenosyl-L-methionine.

This sequence belongs to the RNA methyltransferase TrmD family. As to quaternary structure, homodimer.

The protein resides in the cytoplasm. The enzyme catalyses guanosine(37) in tRNA + S-adenosyl-L-methionine = N(1)-methylguanosine(37) in tRNA + S-adenosyl-L-homocysteine + H(+). Its function is as follows. Specifically methylates guanosine-37 in various tRNAs. This is tRNA (guanine-N(1)-)-methyltransferase from Campylobacter curvus (strain 525.92).